Reading from the N-terminus, the 425-residue chain is tRNA(Ile)-lysidine synthase (425 aa).

Residue 27–32 (SGGLDS) participates in ATP binding.

Belongs to the tRNA(Ile)-lysidine synthase family.

It is found in the cytoplasm. The enzyme catalyses cytidine(34) in tRNA(Ile2) + L-lysine + ATP = lysidine(34) in tRNA(Ile2) + AMP + diphosphate + H(+). Its function is as follows. Ligates lysine onto the cytidine present at position 34 of the AUA codon-specific tRNA(Ile) that contains the anticodon CAU, in an ATP-dependent manner. Cytidine is converted to lysidine, thus changing the amino acid specificity of the tRNA from methionine to isoleucine. The chain is tRNA(Ile)-lysidine synthase from Streptococcus gordonii (strain Challis / ATCC 35105 / BCRC 15272 / CH1 / DL1 / V288).